The sequence spans 605 residues: Pyruvate decarboxylase 1 (605 aa).

Residues Asp-67 and His-154 each contribute to the substrate site. A thiamine pyrophosphate binding region spans residues 432–514 (DSWFNCQKLR…FLINNGGYTI (83 aa)). Mg(2+) is bound by residues Asp-482, Asn-509, and Gly-511. Residue Glu-515 participates in substrate binding.

Belongs to the TPP enzyme family. As to quaternary structure, homotetramer. Requires a metal cation as cofactor. The cofactor is thiamine diphosphate.

The catalysed reaction is a 2-oxocarboxylate + H(+) = an aldehyde + CO2. This is Pyruvate decarboxylase 1 (PDC1) from Oryza sativa subsp. indica (Rice).